Consider the following 776-residue polypeptide: Transcription factor MYB3R-1 (776 aa).

The disordered stretch occupies residues 1 to 41; the sequence is MKREMKAPTTPLESLQGDLKGKQGRTSGPARRSTKGQWTPE. 3 consecutive HTH myb-type domains span residues 30-81, 82-137, and 138-188; these read ARRS…QKVL, NPEL…NPGI, and NKNA…KKKL. 3 DNA-binding regions (H-T-H motif) span residues 58–81, 110–133, and 161–184; these read WKKI…QKVL, WSTI…HNHL, and WAEL…NSSV. Disordered regions lie at residues 217–253, 364–384, and 401–435; these read SSWM…STND, FQSS…TDPE, and DNMK…AETH. Composition is skewed to polar residues over residues 240-253, 364-380, and 423-432; these read CSQA…STND, FQSS…SNSD, and GKGSLCSQAA. The short motif at 648-655 is the Nuclear localization signal element; it reads KKRHRDLL.

As to quaternary structure, component of a DREAM-like complex which modulates a variety of developmentally regulated genes and of the mitotic genes in proliferating and differentiated cells. In terms of tissue distribution, expressed ubiquitously at low levels. Expressed in roots, cotyledons, flowers and leaves, especially in vascular tissues.

The protein resides in the nucleus. Its function is as follows. Transcription factor that binds 5'-AACGG-3' motifs in gene promoters. Transcription activator involved in the regulation of cytokinesis, probably via the activation of several G2/M phase-specific genes transcription (e.g. KNOLLE). Transcription repressor that regulates organ growth. Binds to the promoters of G2/M-specific genes and to E2F target genes to prevent their expression in post-mitotic cells and to restrict the time window of their expression in proliferating cells. Required for the maintenance of diploidy. The polypeptide is Transcription factor MYB3R-1 (Arabidopsis thaliana (Mouse-ear cress)).